Consider the following 103-residue polypeptide: Co-chaperonin GroES (103 aa).

It belongs to the GroES chaperonin family. In terms of assembly, heptamer of 7 subunits arranged in a ring. Interacts with the chaperonin GroEL.

It is found in the cytoplasm. Functionally, together with the chaperonin GroEL, plays an essential role in assisting protein folding. The GroEL-GroES system forms a nano-cage that allows encapsulation of the non-native substrate proteins and provides a physical environment optimized to promote and accelerate protein folding. GroES binds to the apical surface of the GroEL ring, thereby capping the opening of the GroEL channel. In Synechococcus sp. (strain JA-2-3B'a(2-13)) (Cyanobacteria bacterium Yellowstone B-Prime), this protein is Co-chaperonin GroES.